We begin with the raw amino-acid sequence, 365 residues long: 2-aminoethylphosphonate--pyruvate transaminase (365 aa).

The residue at position 194 (K194) is an N6-(pyridoxal phosphate)lysine.

It belongs to the class-V pyridoxal-phosphate-dependent aminotransferase family. PhnW subfamily. Homodimer. Pyridoxal 5'-phosphate serves as cofactor.

The catalysed reaction is (2-aminoethyl)phosphonate + pyruvate = phosphonoacetaldehyde + L-alanine. Functionally, involved in phosphonate degradation. The protein is 2-aminoethylphosphonate--pyruvate transaminase of Bacillus cereus (strain ATCC 10987 / NRS 248).